Reading from the N-terminus, the 324-residue chain is Beta-ketoacyl-[acyl-carrier-protein] synthase III (324 aa).

Residues Cys114 and His251 contribute to the active site. Positions 252 to 256 (QANKR) are ACP-binding. The active site involves Asn281.

It belongs to the thiolase-like superfamily. FabH family. As to quaternary structure, homodimer.

The protein resides in the cytoplasm. The enzyme catalyses malonyl-[ACP] + acetyl-CoA + H(+) = 3-oxobutanoyl-[ACP] + CO2 + CoA. Its pathway is lipid metabolism; fatty acid biosynthesis. Catalyzes the condensation reaction of fatty acid synthesis by the addition to an acyl acceptor of two carbons from malonyl-ACP. Catalyzes the first condensation reaction which initiates fatty acid synthesis and may therefore play a role in governing the total rate of fatty acid production. Possesses both acetoacetyl-ACP synthase and acetyl transacylase activities. Its substrate specificity determines the biosynthesis of branched-chain and/or straight-chain of fatty acids. The protein is Beta-ketoacyl-[acyl-carrier-protein] synthase III of Bradyrhizobium sp. (strain BTAi1 / ATCC BAA-1182).